Reading from the N-terminus, the 387-residue chain is Phosphoglycerate kinase (387 aa).

Residues 21–23 (DLN), arginine 36, 59–62 (HLGR), arginine 113, and arginine 146 each bind substrate. ATP is bound by residues lysine 197, glutamate 314, and 340–343 (GGDT).

This sequence belongs to the phosphoglycerate kinase family. Monomer.

Its subcellular location is the cytoplasm. It carries out the reaction (2R)-3-phosphoglycerate + ATP = (2R)-3-phospho-glyceroyl phosphate + ADP. It participates in carbohydrate degradation; glycolysis; pyruvate from D-glyceraldehyde 3-phosphate: step 2/5. In Cronobacter sakazakii (strain ATCC BAA-894) (Enterobacter sakazakii), this protein is Phosphoglycerate kinase.